Here is a 265-residue protein sequence, read N- to C-terminus: Type-1Ba cytolytic delta-endotoxin (265 aa).

This sequence belongs to the cyt1/cyt2 endotoxin family. In terms of processing, active after proteolytic processing.

Its function is as follows. Kills the larvae of dipteran insects by making pores in the epithelial cell membrane of the insect midgut. The protein is Type-1Ba cytolytic delta-endotoxin (cyt1Ba1) of Bacillus thuringiensis subsp. neoleoensis.